The sequence spans 169 residues: Podoplanin (169 aa).

Residues 1–22 (MWRVPVLLLVLGGAGLRVPAAG) form the signal peptide. Residues 23 to 138 (ASTVRPDDII…EKDGLATVTL (116 aa)) lie on the Extracellular side of the membrane. Thr-25 carries O-linked (GalNAc...) threonine glycosylation. A disordered region spans residues 37–69 (DSVVTPGTEDSVVTPGAEDNVVTDGATEEPYES). O-linked (GalNAc...) serine glycosylation occurs at Ser-38. O-linked (GalNAc...) threonine glycosylation is found at Thr-41 and Thr-44. Residue Ser-47 is glycosylated (O-linked (GalNAc...) serine). O-linked (GalNAc...) threonine glycosylation is found at Thr-50, Thr-59, Thr-63, Thr-72, Thr-76, Thr-79, Thr-83, Thr-92, Thr-96, Thr-106, Thr-107, Thr-108, Thr-113, Thr-126, and Thr-127. A helical transmembrane segment spans residues 139–159 (VGIIVGVLLAIGFIGGIIIVV). The tract at residues 140–144 (GIIVG) is requires for dimerization and lipid rafts association. The Cytoplasmic segment spans residues 160–169 (ARKMSGRYSP). The interval 161-162 (RK) is requires for interaction with MSN and EZR.

Belongs to the podoplanin family. Homodimer. Interacts with CLEC1B; the interaction is independent of CLEC1B glycosylation and activates CLEC1B; the interaction is dependent of sialic acid on O-glycans. Interacts with CD9; this interaction is homophilic and attenuates platelet aggregation and pulmonary metastasis induced by PDPN. Interacts with LGALS8; the interaction is glycosylation-dependent; may participate in connection of the lymphatic endothelium to the surrounding extracellular matrix. Interacts with HSPA9. Interacts (via extracellular domain) with CD44; this interaction is required for PDPN-mediated directional migration and regulation of lamellipodia extension/stabilization during cell spreading and migration. Interacts (via cytoplasmic domain) with MSN and EZR; activates RHOA and promotes epithelial-mesenchymal transition. Interacts with CCL21; relocalized PDPN to the basolateral membrane. Extensively O-glycosylated. Contains sialic acid residues. O-glycosylation is necessary for platelet aggregation activity. Disialylated at Thr-59; sialic acid is critical for platelet-aggregating activity and for CLEC1B interaction. In terms of processing, the N-terminus is blocked.

It is found in the membrane. Its subcellular location is the cell projection. The protein resides in the filopodium membrane. It localises to the lamellipodium membrane. The protein localises to the microvillus membrane. It is found in the ruffle membrane. Its subcellular location is the membrane raft. The protein resides in the apical cell membrane. It localises to the basolateral cell membrane. The protein localises to the invadopodium. Functionally, mediates effects on cell migration and adhesion through its different partners. During development plays a role in blood and lymphatic vessels separation by binding CLEC1B, triggering CLEC1B activation in platelets and leading to platelet activation and/or aggregation. Interaction with CD9, on the contrary, attenuates platelet aggregation and pulmonary metastasis induced by PDPN. Mediates effects on cell migration and adhesion through its different partners. Through MSN or EZR interaction promotes epithelial-mesenchymal transition (EMT) leading to ERZ phosphorylation and triggering RHOA activation leading to cell migration increase and invasiveness. Interaction with CD44 promotes directional cell migration in epithelial and tumor cells. In lymph nodes (LNs), controls fibroblastic reticular cells (FRCs) adhesion to the extracellular matrix (ECM) and contraction of the actomyosin by maintaining ERM proteins (EZR; MSN and RDX) and MYL9 activation through association with unknown transmembrane proteins. Engagement of CLEC1B by PDPN promotes FRCs relaxation by blocking lateral membrane interactions leading to reduction of ERM proteins (EZR; MSN and RDX) and MYL9 activation. Through binding with LGALS8 may participate in connection of the lymphatic endothelium to the surrounding extracellular matrix. In keratinocytes, induces changes in cell morphology showing an elongated shape, numerous membrane protrusions, major reorganization of the actin cytoskeleton, increased motility and decreased cell adhesion. Controls invadopodia stability and maturation leading to efficient degradation of the extracellular matrix (ECM) in tumor cells through modulation of RHOC activity in order to activate ROCK1/ROCK2 and LIMK1/LIMK2 and inactivation of CFL1. Required for normal lung cell proliferation and alveolus formation at birth. Does not function as a water channel or as a regulator of aquaporin-type water channels. Does not have any effect on folic acid or amino acid transport. The protein is Podoplanin (PDPN) of Canis lupus familiaris (Dog).